A 425-amino-acid chain; its full sequence is uncharacterized protein (425 aa).

The 57-residue stretch at 1–57 folds into the TRAM domain; it reads MKDKPLKLTVEKLVYGGYGFSRLNGKAVFVRFASPKELVEAKVVKEKKDYTEAVVTK. Residues cysteine 70, cysteine 76, cysteine 79, and cysteine 153 each coordinate [4Fe-4S] cluster. 3 residues coordinate S-adenosyl-L-methionine: glutamine 260, aspartate 308, and aspartate 354. Catalysis depends on cysteine 381, which acts as the Nucleophile.

The protein belongs to the class I-like SAM-binding methyltransferase superfamily. RNA M5U methyltransferase family.

This is an uncharacterized protein from Aquifex aeolicus (strain VF5).